A 494-amino-acid polypeptide reads, in one-letter code: MPPSTDSSRRNSEEGFSDGFKLDSSALNKPPEEVFDIVGKLGEGSYGSVHKAIHKESGHVLAIKKVPVDTDLQEIIKEISIMQQCKSKYVVKYYGSYFKNSDLWIVMEYCGAGSISDIMRARRKPLSEKEISAVLRDTLKGLQYLHDLKKIHRDIKAGNILLNTDGIAKLADFGVAGQLTDTMAKRNTVIGTPFWMAPEVIEEIGYDTKADIWSLGITAIEMAEGRPPYSDIHPMRAIFMIPTKPPPTFKKPEEWSSEFNDFIRCCLIKKPEERKTALRLCEHTFIENAPGCDVLQAMILDAQEKVLLGQAPVAVAGADATLLSEGMSTMIDGGDATLVQYKDNYVTAQSLRSQMESLKIGGEIPKSAYGSSRNNGSPRVQPPGHTASACDPSNNPPFAEEGTGPNFQIGTSESSYKDASYNMMNTEAEYENRFQRAVCDGDFEFLRNITLDELIRRKESLDSEMEEEIRELQRRYKTKRQPILDVIEIKKRLN.

A disordered region spans residues 1 to 27 (MPPSTDSSRRNSEEGFSDGFKLDSSAL). The Protein kinase domain occupies 35–286 (FDIVGKLGEG…ALRLCEHTFI (252 aa)). Residues 41-49 (LGEGSYGSV) and K64 each bind ATP. D154 functions as the Proton acceptor in the catalytic mechanism. Positions 364–413 (IPKSAYGSSRNNGSPRVQPPGHTASACDPSNNPPFAEEGTGPNFQIGTSE) are disordered. The segment covering 369-378 (YGSSRNNGSP) has biased composition (polar residues). Residues 443-490 (FEFLRNITLDELIRRKESLDSEMEEEIRELQRRYKTKRQPILDVIEIK) form the SARAH domain.

Belongs to the protein kinase superfamily. STE Ser/Thr protein kinase family. STE20 subfamily. It depends on Mg(2+) as a cofactor. In terms of processing, proteolytically cleaved by caspase-3 during apoptosis which results in kinase activation.

It catalyses the reaction L-seryl-[protein] + ATP = O-phospho-L-seryl-[protein] + ADP + H(+). The enzyme catalyses L-threonyl-[protein] + ATP = O-phospho-L-threonyl-[protein] + ADP + H(+). Serine/threonine-protein kinase which extends lifespan and delays tissue aging, probably by activating daf-16. This Caenorhabditis briggsae protein is Serine/threonine-protein kinase cst-1 (cst-1).